Reading from the N-terminus, the 379-residue chain is Alkanesulfonate monooxygenase (379 aa).

The protein belongs to the SsuD family.

The enzyme catalyses an alkanesulfonate + FMNH2 + O2 = an aldehyde + FMN + sulfite + H2O + 2 H(+). Its function is as follows. Catalyzes the desulfonation of aliphatic sulfonates. The polypeptide is Alkanesulfonate monooxygenase (Pseudomonas syringae pv. syringae (strain B728a)).